Here is a 440-residue protein sequence, read N- to C-terminus: Putative postmeiotic segregation increased 2-like protein 1 (440 aa).

Residues 164–178 (RVEHNVESSRWEPRR) are compositionally biased toward basic and acidic residues. Residues 164–215 (RVEHNVESSRWEPRRRGACGSRGGNFPSPRGGSGVASLERAESSSTEPAKAI) form a disordered region. Positions 230 to 364 (PVVPSLSTAV…MTVSVKQLFS (135 aa)) constitute a Histidine kinase domain.

The protein belongs to the DNA mismatch repair MutL/HexB family. Highly expressed in kidney, spleen, adrenal gland, ovary and cerebellum and to a lower extent in liver, esophagus, stomach, duodenum, colon, bladder, uterus, lung, pancreas and cerebrum. Not expressed in heart.

The polypeptide is Putative postmeiotic segregation increased 2-like protein 1 (PMS2P1) (Homo sapiens (Human)).